The following is a 2273-amino-acid chain: KGKTITHGQSWGARRIHSHFYITIFTITCIRIGQYKLALYLDPYRFYNITGSQIVRLKGQRPEYRKRIFAHSYRHSSRIGLNFPSRRRYSNYVDRGNIHKHTRLPPQFIGLNTVESAQPSILRDFVDLRGGHTVISKILIANNGIAAVKEMRSIRKWAYETFNDEKIIQFVVMATPDDLHANSEYIRMADQYVQVPGGTNNNNYANIDLILDVAEQTDVDAVWAGWGHASENPCLPELLASSQRKILFIGPPGRAMRSLGDKISSTIVAQSAKIPCIPWSGSHIDTIHIDNKTNFVSVPDDVYVRGCCSSPEDALEKAKLIGFPVMIKASEGGGGKGIRRVDNEDDFIALYRQAVNETPGSPMFVMKVVTDARHLEVQLLADQYGTNITLFGRDCSIQRRHQKIIEEAPVTITKPETFQRMERAAIRLGELVGYVSAGTVEYLYSPKDDKFYFLELNPRLQVEHPTTEMISGVNLPATQLQIAMGIPMHMISDIRKLYGLDPTGTSYIDFKNLKRPSPKGHCISCRITSEDPNEGFKPSTGKIHELNFRSSSNVWGYFSVGNNGAIHSFSDSQFGHIFAVGNDRQDAKQNMVLALKDFSIRGEFKTPIEYLIELLETRDFESNNISTGWLDDLILKNLSSDSKLDPTLAIICGAAMKAYVFTEKVRNKYLELLRRGQVPPKDFLKTKFPVDFIFDNNRYLFNVAQSSEEQFILSINKSQCEVNVQKLSGDCLLISVDGKCHTVYWKDDIRGTRLSIDSNTIFLEAELNPTQVISPTPGKLVKYLVRSGDHVFAGQQYAEIEIMKMQMPLVAKSDGVIELLRQPGSIIEAGDVIAKLTLDSPSKANESSLYRGELPVLGPPLIEGSRPNHKLRVLINRLENILNGYHENSGIETTLKELIKILRDGRLPYSEWDSQISTVRNRLPRQLNEGLGNLVKKSVSFPAKELHKLMKRYLEENTNDHVVYVALQPLLKISERYSEGLANHECEIFLKLIKKYYAVEKIFENHDIHEERNLLNLRRKDLTNLKEILCISLSHANVVAKNKLVTAILHEYEPLCQDSSKMSLKFRAVIHDLASLESKWAKEVAVKARSVLLRGIFPPIKKRKEHIKTLLQLHIKDTGAENIHSRNIYSCMRDFGNLIHSNLIQLQDLFFFFGHQDTALSSIASEIYARYAYGNYQLKSIKIHKGAPDLLMSWQFSSLRNYLVNPDGESDEFTKLSKPPSTSGKSSANSFGLLVNMRALESLEKTLDEVYEQIHIPEERLSSGENSLIVNILSPIRYRSENDLIKTLKIKLHENERGLSKLKVNRITFAFIAANAPTVKFYSFDGTTYDEISQIRNMDPSYEAPLELGKMSNYKIRSLPTYDSSIRIFEGISKFTPLDKRFFVRKIINSSMYNDQKTTEENLKAEINAQVVYMLEHLGAVDTSNSDLNHIFLSFNTVLNIPVHRLEEIVSTILKTHETRLFQERITDVEICISVECLETKKPAPLRLLISNKSGYVVKIETYYEKIGKNGNLILEPCSEQSHYSQKSLSLPYSVKDWLQPKRYKAQFMGTTYVYDFPGLFHQAAIQQWKRYFPKHKLNDSFFSWVELIEQNGNLIKVNREPGLNNIGMVAFEIMVQTPEYPEGRNMIVISNDITYNIGSFGPREDLFFDRVTNYARERGIPRIYLAANSGAKLGIAEELIPLFRVAWNDPSDPTKGFQYLYLAPKDMQLLKDYGKGNSVVVEHKMVYGEERYIIKAIVGFEEGLGVECLQGSGLIAGATSKAYRDIFTITAVTCRSVGIGSYLVRLGQRTIQVEDKPIILTGASAINKVLGTDIYTSNLQIGGTQIMYKNGIAHLTAGNDMKAIEKIMTWLSYVPAKRDMSPPLLETMDRWDRDVDFKPAKQVPYEARWLIEGKWDSNNNFQSGLFDKDSFFETLSGWAKGVIVGRARLGGIPVGVIAVETKTIEEIIPADPANLDSSEFSVKEAGQVWYPNSAFKTAQTINDFNYGEQLPLIILANWRGFSGGQRDMYNEVLKYGSFIVDALVDYKQPILIYIPPFGELRGGSWVVIDPTINPEQMEMYADVESRGGVLEPDGVVSIKYRKEKMIETMIRLDSTYGHLRRTLTEKKLSLEKQNDLTKRLKIRERQLIPIYNQISIQFADLHDRSTRMLVKGVIRKELEWKKSRRFLYWRLRRRLNEGQVIKRLQKKTCDNKTKMKYDDLLKIVQSWYNDLDVNDDRAVVEFIERNSKKIDKNIEEFEISLLIDELKKKFEDRRGNIVLEELTRLVDSKRKR.

The N-terminal 104 residues, 1–104, are a transit peptide targeting the mitochondrion; sequence KGKTITHGQS…RGNIHKHTRL (104 aa). Residues 134–635 form the Biotin carboxylation domain; the sequence is VISKILIANN…STGWLDDLIL (502 aa). In terms of domain architecture, ATP-grasp spans 292–484; it reads KTNFVSVPDD…LPATQLQIAM (193 aa). 332 to 337 contributes to the ATP binding site; it reads GGGGKG. The active site involves Arg459. In terms of domain architecture, Biotinyl-binding spans 763-837; sequence LEAELNPTQV…EAGDVIAKLT (75 aa). Lys804 carries the post-translational modification N6-biotinyllysine. One can recognise a CoA carboxyltransferase N-terminal domain in the interval 1532-1867; that stretch reads PYSVKDWLQP…KRDMSPPLLE (336 aa). The interval 1532–2187 is carboxyltransferase; the sequence is PYSVKDWLQP…EGQVIKRLQK (656 aa). Positions 1776, 2080, and 2082 each coordinate CoA. In terms of domain architecture, CoA carboxyltransferase C-terminal spans 1871–2187; sequence RWDRDVDFKP…EGQVIKRLQK (317 aa).

Requires biotin as cofactor.

The protein localises to the mitochondrion. It carries out the reaction hydrogencarbonate + acetyl-CoA + ATP = malonyl-CoA + ADP + phosphate + H(+). It catalyses the reaction N(6)-biotinyl-L-lysyl-[protein] + hydrogencarbonate + ATP = N(6)-carboxybiotinyl-L-lysyl-[protein] + ADP + phosphate + H(+). Its pathway is lipid metabolism; malonyl-CoA biosynthesis; malonyl-CoA from acetyl-CoA: step 1/1. Its function is as follows. Catalyzes the rate-limiting reaction in the mitochondrial fatty acid synthesis (FAS) type II pathway. Responsible for the production of the mitochondrial malonyl-CoA, used for the biosynthesis of the cofactor lipoic acid. This protein carries three functions: biotin carboxyl carrier protein, biotin carboxylase, and carboxyltransferase. This Saccharomyces cerevisiae (strain YJM789) (Baker's yeast) protein is Acetyl-CoA carboxylase, mitochondrial (HFA1).